The following is a 144-amino-acid chain: Large ribosomal subunit protein uL11 (144 aa).

This sequence belongs to the universal ribosomal protein uL11 family. As to quaternary structure, part of the ribosomal stalk of the 50S ribosomal subunit. Interacts with L10 and the large rRNA to form the base of the stalk. L10 forms an elongated spine to which L12 dimers bind in a sequential fashion forming a multimeric L10(L12)X complex. One or more lysine residues are methylated.

Forms part of the ribosomal stalk which helps the ribosome interact with GTP-bound translation factors. This Francisella tularensis subsp. mediasiatica (strain FSC147) protein is Large ribosomal subunit protein uL11.